Reading from the N-terminus, the 108-residue chain is UPF0102 protein Tpet_0671 (108 aa).

It belongs to the UPF0102 family.

The chain is UPF0102 protein Tpet_0671 from Thermotoga petrophila (strain ATCC BAA-488 / DSM 13995 / JCM 10881 / RKU-1).